The chain runs to 173 residues: MTEYFEVGKILSPHGLKGEVKVNATTDFPEERLATGSRLFIKNNKQYEELIVENTRRHKQFYLVKFEKIDDIDQAEKICSKELYVAETDQQELPEGSYYFKDILNCPVYDAETGEKLGVLENIETPGANDIWEIKPEKGKSFWIPNIESVVKKVDLANKRIEVTLLEGLRDEN.

The 75-residue stretch at 95 to 169 (EGSYYFKDIL…RIEVTLLEGL (75 aa)) folds into the PRC barrel domain.

The protein belongs to the RimM family. In terms of assembly, binds ribosomal protein uS19.

It is found in the cytoplasm. Functionally, an accessory protein needed during the final step in the assembly of 30S ribosomal subunit, possibly for assembly of the head region. Essential for efficient processing of 16S rRNA. May be needed both before and after RbfA during the maturation of 16S rRNA. It has affinity for free ribosomal 30S subunits but not for 70S ribosomes. This is Ribosome maturation factor RimM from Lactobacillus johnsonii (strain CNCM I-12250 / La1 / NCC 533).